Reading from the N-terminus, the 136-residue chain is Plastocyanin (136 aa).

An N-terminal signal peptide occupies residues 1-34 (MSLVFNLVKRLQLILLSLVVGGLAVAFLSNPAAA). A Plastocyanin-like domain is found at 35–136 (ETYIVKMGSD…GMVGKIIVNG (102 aa)). 4 residues coordinate Cu cation: H73, C120, H123, and M128.

Belongs to the plastocyanin family. Cu(2+) serves as cofactor.

The protein localises to the cellular thylakoid membrane. Its function is as follows. Participates in electron transfer between P700 and the cytochrome b6-f complex in photosystem I. The protein is Plastocyanin of Synechococcus sp. (strain JA-2-3B'a(2-13)) (Cyanobacteria bacterium Yellowstone B-Prime).